The chain runs to 241 residues: Large ribosomal subunit protein uL3 (241 aa).

Disordered stretches follow at residues 139–166 (VSHR…PGHM) and 214–241 (ADAP…QEGA). The residue at position 151 (glutamine 151) is an N5-methylglutamine. A compositionally biased stretch (low complexity) spans 229–241 (AAAEAPAAEQEGA).

In terms of assembly, part of the 50S ribosomal subunit. Forms a cluster with proteins L14 and L19. Methylated, on either Lys-155 or Lys-158. In terms of processing, methylated by PrmB.

Its function is as follows. One of the primary rRNA binding proteins, it binds directly near the 3'-end of the 23S rRNA, where it nucleates assembly of the 50S subunit. The polypeptide is Large ribosomal subunit protein uL3 (Rhodopseudomonas palustris (strain ATCC BAA-98 / CGA009)).